The following is a 321-amino-acid chain: Large ribosomal subunit protein uL3 (321 aa).

Belongs to the universal ribosomal protein uL3 family. As to quaternary structure, part of the 50S ribosomal subunit. Forms a cluster with proteins L14 and L24e.

In terms of biological role, one of the primary rRNA binding proteins, it binds directly near the 3'-end of the 23S rRNA, where it nucleates assembly of the 50S subunit. This chain is Large ribosomal subunit protein uL3, found in Nanoarchaeum equitans (strain Kin4-M).